Reading from the N-terminus, the 175-residue chain is NADH-ubiquinone oxidoreductase chain 6 (175 aa).

A run of 5 helical transmembrane segments spans residues 1 to 21 (MMLYIVFILSVIFVIGFVGFS), 25 to 45 (SPIYGGLGLIVSGGVGCGIVL), 47 to 67 (FGGSFLGLMVFLIYLGGMMVV), 88 to 108 (AVLGAFITALLMEFFMVYYVL), and 149 to 169 (YGTWLVIVTGWSLFIGVVVIM).

Belongs to the complex I subunit 6 family. As to quaternary structure, core subunit of respiratory chain NADH dehydrogenase (Complex I) which is composed of 45 different subunits.

The protein resides in the mitochondrion inner membrane. It carries out the reaction a ubiquinone + NADH + 5 H(+)(in) = a ubiquinol + NAD(+) + 4 H(+)(out). Its function is as follows. Core subunit of the mitochondrial membrane respiratory chain NADH dehydrogenase (Complex I) which catalyzes electron transfer from NADH through the respiratory chain, using ubiquinone as an electron acceptor. Essential for the catalytic activity and assembly of complex I. The sequence is that of NADH-ubiquinone oxidoreductase chain 6 (MT-ND6) from Bos mutus grunniens (Wild yak).